A 569-amino-acid chain; its full sequence is Spermatogenesis-associated protein 16 (569 aa).

Belongs to the SPATA16 family.

It localises to the golgi apparatus. Its subcellular location is the cytoplasmic vesicle. It is found in the secretory vesicle. The protein resides in the acrosome. In terms of biological role, essential for spermiogenesis and male fertility. Involved in the formation of sperm acrosome during spermatogenesis. The sequence is that of Spermatogenesis-associated protein 16 (SPATA16) from Macaca fascicularis (Crab-eating macaque).